A 617-amino-acid polypeptide reads, in one-letter code: MPQYRSRTSTHGRNMAGARGLWRATGMKDGDFGKPIIAVVNSFTQFVPGHVHLKDLGQLVAREIEKAGGVAKEFNTIAVDDGIAMGHDGMLYSLPSREIIADSVEYMVNAHCADAMVCISNCDKITPGMLMAAMRLNIPAVFVSGGPMEAGKVLLSTGEKKVDLIDAMIAAADDKVTDADVQVMERSACPTCGSCSGMFTANSMNCLTEALGLALPGNGSTLATHADRERLFVEAGHLIVDLARRYYEQDDASVLPRSVASFKAFENAMTLDISMGGSTNTVLHLLAAANEGEVPFTMADIDRLSRRVPVLCKVAPAVANIHMEDVHRAGGIMAILGELDRGGLIHTDLPTVHAATMADALDRWDVKRTKSESVATFFRAAPGGVPTQVAFSQSRRWDDLDLDRETGVIRDVAHAYSKDGGLAVLYGNIALDGCIVKTAGVDASILKFTGKARIFESQDAAVEAILSTGRIQAGDVVLIRYEGPRGGPGMQEMLYPTSYLKSKGLGKACALVTDGRFSGGSSGLSIGHVSPEAAEGGAIGLVEEGDTIEIDIPNRIIRVAVSDEVLSQRRAAMEAKGDAAWKPADRKRVVSQALQAYAALTTSAARGAVRDVSRLRR.

A Mg(2+)-binding site is contributed by D81. Residue C122 participates in [2Fe-2S] cluster binding. Positions 123 and 124 each coordinate Mg(2+). K124 is modified (N6-carboxylysine). Residue C195 participates in [2Fe-2S] cluster binding. E492 lines the Mg(2+) pocket. The active-site Proton acceptor is the S518.

It belongs to the IlvD/Edd family. In terms of assembly, homodimer. [2Fe-2S] cluster serves as cofactor. It depends on Mg(2+) as a cofactor.

It catalyses the reaction (2R)-2,3-dihydroxy-3-methylbutanoate = 3-methyl-2-oxobutanoate + H2O. The enzyme catalyses (2R,3R)-2,3-dihydroxy-3-methylpentanoate = (S)-3-methyl-2-oxopentanoate + H2O. It functions in the pathway amino-acid biosynthesis; L-isoleucine biosynthesis; L-isoleucine from 2-oxobutanoate: step 3/4. It participates in amino-acid biosynthesis; L-valine biosynthesis; L-valine from pyruvate: step 3/4. Functionally, functions in the biosynthesis of branched-chain amino acids. Catalyzes the dehydration of (2R,3R)-2,3-dihydroxy-3-methylpentanoate (2,3-dihydroxy-3-methylvalerate) into 2-oxo-3-methylpentanoate (2-oxo-3-methylvalerate) and of (2R)-2,3-dihydroxy-3-methylbutanoate (2,3-dihydroxyisovalerate) into 2-oxo-3-methylbutanoate (2-oxoisovalerate), the penultimate precursor to L-isoleucine and L-valine, respectively. The polypeptide is Dihydroxy-acid dehydratase (Xanthobacter autotrophicus (strain ATCC BAA-1158 / Py2)).